The sequence spans 1459 residues: Mediator of RNA polymerase II transcription subunit 14 (1459 aa).

The tract at residues 1–37 (MAPVQLDNHQLIPPGGGGGSSGGGGSSSGSASAPAPP) is disordered. Over residues 14–27 (PGGGGGSSGGGGSS) the composition is skewed to gly residues. An LXXLL motif 1 motif is present at residues 75–79 (LTDLL). Residues 194–572 (KQATLHQLNQ…VPNKPTQLSY (379 aa)) form an interaction with STAT2 region. Residues 506–830 (LGQQRCKQSI…TKGSSISIQW (325 aa)) are interaction with SREBF1. S623 and S992 each carry phosphoserine. A disordered region spans residues 979 to 1171 (ARRRSVNEDD…NMPPPRKLPQ (193 aa)). Composition is skewed to polar residues over residues 1029–1059 (PPTS…SSPS) and 1097–1106 (DPSSPYTMVS). Phosphoserine is present on residues S1117, S1124, S1133, S1141, and S1149. The span at 1152–1161 (AGTSSQTMPT) shows a compositional bias: polar residues. Residues 1187–1191 (LNILL) carry the LXXLL motif 2 motif.

The protein belongs to the Mediator complex subunit 14 family. As to quaternary structure, component of the Mediator complex, which is composed of MED1, MED4, MED6, MED7, MED8, MED9, MED10, MED11, MED12, MED13, MED13L, MED14, MED15, MED16, MED17, MED18, MED19, MED20, MED21, MED22, MED23, MED24, MED25, MED26, MED27, MED29, MED30, MED31, CCNC, CDK8 and CDC2L6/CDK11. The MED12, MED13, CCNC and CDK8 subunits form a distinct module termed the CDK8 module. Mediator containing the CDK8 module is less active than Mediator lacking this module in supporting transcriptional activation. Individual preparations of the Mediator complex lacking one or more distinct subunits have been variously termed ARC, CRSP, DRIP, PC2, SMCC and TRAP. Interacts with AR, ESR1, SREBF1 and STAT2. Interacts with GATA1.

The protein localises to the nucleus. Component of the Mediator complex, a coactivator involved in the regulated transcription of nearly all RNA polymerase II-dependent genes. Mediator functions as a bridge to convey information from gene-specific regulatory proteins to the basal RNA polymerase II transcription machinery. Mediator is recruited to promoters by direct interactions with regulatory proteins and serves as a scaffold for the assembly of a functional preinitiation complex with RNA polymerase II and the general transcription factors. The protein is Mediator of RNA polymerase II transcription subunit 14 (Med14) of Mus musculus (Mouse).